A 142-amino-acid polypeptide reads, in one-letter code: Small ribosomal subunit protein bS16 (142 aa).

The interval 101–142 is disordered; that stretch reads RPSFDALGGDDAGKGEAITQKKKAEKKDEAAAESSSSESTEA. Residues 132-142 show a composition bias toward low complexity; sequence AESSSSESTEA.

The protein belongs to the bacterial ribosomal protein bS16 family.

This Streptomyces avermitilis (strain ATCC 31267 / DSM 46492 / JCM 5070 / NBRC 14893 / NCIMB 12804 / NRRL 8165 / MA-4680) protein is Small ribosomal subunit protein bS16.